A 492-amino-acid chain; its full sequence is KAT8 regulatory NSL complex subunit 2 (492 aa).

A Glycyl lysine isopeptide (Lys-Gly) (interchain with G-Cter in SUMO2) cross-link involves residue Lys78. The segment at 126–182 is disordered; sequence ELGSQTPESSRSEASRILDEDSWSDGEQEPITVDQTWRGDPDSEADSIDSDQEDPLK. Residue Thr131 is modified to Phosphothreonine. Residues 135 to 144 show a composition bias toward basic and acidic residues; the sequence is SRSEASRILD. Ser147, Ser149, Ser168, Ser172, and Ser175 each carry phosphoserine. A compositionally biased stretch (acidic residues) spans 167–178; sequence DSEADSIDSDQE. Positions 308–364 are required for interaction with other NSL complex members; the sequence is DVRCSNQSLPMTRHCLTHICQDTNQVLFKCCQGSEEVPCNKPVPVSLSEDPCCPLHF. Positions 455 to 492 are disordered; sequence AGDGCRSQGSRNSEKASAPLSQSGLATANGKPEPTSIS.

Component of the NSL complex at least composed of KAT8/MOF, KANSL1, KANSL2, KANSL3, MCRS1, PHF20, OGT1/OGT, WDR5 and HCFC1.

It is found in the nucleus. Its subcellular location is the mitochondrion. Functionally, non-catalytic component of the NSL histone acetyltransferase complex, a multiprotein complex that mediates histone H4 acetylation at 'Lys-5'- and 'Lys-8' (H4K5ac and H4K8ac) at transcription start sites and promotes transcription initiation. Required for NSL complex stability and for transcription of intraciliary transport genes in both ciliated and non-ciliated cells by regulating histone H4 acetylation at 'Lys-5'- and 'Lys-12' (H4K5ac and H4K12ac). This is necessary for cilium assembly in ciliated cells and for organization of the microtubule cytoskeleton in non-ciliated cells. Required within the NSL complex to maintain nuclear architecture stability by promoting KAT8-mediated acetylation of lamin LMNA. The chain is KAT8 regulatory NSL complex subunit 2 (KANSL2) from Homo sapiens (Human).